Here is a 1399-residue protein sequence, read N- to C-terminus: Stress response protein NST1 (1399 aa).

Polar residues predominate over residues 28-52 (SANTQGNSHQIPRKQSQSTNSNHQE). 10 disordered regions span residues 28–105 (SANT…VIKQ), 119–155 (EDENHHHHEYEEHEDSCEYHPSSKSNTRKNSSVNEST), 202–249 (TRHH…NNGN), 318–353 (QQKYKEKWNHSHHSTSVSPQPESQDNKQLKKSQDQN), 546–574 (TVISQNPQEQKSVSIGQSDQSGDVWVDDD), 589–681 (NPHH…EEEK), 722–894 (EAEE…VNDD), 949–990 (AKLM…SSFQ), 1134–1178 (SGNQ…NNNN), and 1373–1399 (PPIGESSTNDAGSSNVGNSGFGRRLWN). Positions 53–69 (QSQQARNQSSQSNTNTT) are enriched in low complexity. Residues 70–82 (SRKKRKKHKKKSK) show a composition bias toward basic residues. The segment covering 140–154 (SSKSNTRKNSSVNES) has biased composition (polar residues). The segment covering 207–249 (QQQLSSSVSSQPQQQQSQQNVSTSSNNGSSSGINNNSNNNNGN) has biased composition (low complexity). The segment covering 331 to 340 (STSVSPQPES) has biased composition (polar residues). The segment covering 341 to 353 (QDNKQLKKSQDQN) has biased composition (basic and acidic residues). The segment covering 547 to 566 (VISQNPQEQKSVSIGQSDQS) has biased composition (polar residues). A compositionally biased stretch (basic residues) spans 591–618 (HHHHHHHQHSNKQHDHHHCHNHRHRHRR). Positions 622-678 (ELDDEHDQENEDEELEDDEEDYYDEYDDDEEEDEEEDEDDDDIEEEGASDTESEISE) are enriched in acidic residues. Residues 708 to 896 (KLSQDRTQKL…TKLMVNDDDE (189 aa)) are a coiled coil. Basic and acidic residues-rich tracts occupy residues 722 to 743 (EAEENAKKERELKKLKQKEKAK) and 752 to 888 (AKEE…ERTK). Over residues 1134-1156 (SGNQSGISAPTTTSTNTSSRNNS) the composition is skewed to low complexity. Composition is skewed to polar residues over residues 1157–1172 (IWGNTNPNKVTEPSLL) and 1377–1390 (ESSTNDAGSSNVGN).

It belongs to the NST1 family.

It localises to the cytoplasm. In terms of biological role, may act as a negative regulator of salt tolerance. In Candida albicans (strain SC5314 / ATCC MYA-2876) (Yeast), this protein is Stress response protein NST1 (NST1).